We begin with the raw amino-acid sequence, 299 residues long: Pyrroline-5-carboxylate reductase 2 (299 aa).

The protein belongs to the pyrroline-5-carboxylate reductase family. In terms of assembly, homodecamer; composed of 5 homodimers.

The catalysed reaction is L-proline + NADP(+) = (S)-1-pyrroline-5-carboxylate + NADPH + 2 H(+). It catalyses the reaction L-proline + NAD(+) = (S)-1-pyrroline-5-carboxylate + NADH + 2 H(+). The protein operates within amino-acid biosynthesis; L-proline biosynthesis; L-proline from L-glutamate 5-semialdehyde: step 1/1. The protein is Pyrroline-5-carboxylate reductase 2 (pycr2) of Dictyostelium discoideum (Social amoeba).